Consider the following 385-residue polypeptide: Acetate kinase (385 aa).

Asn-9 provides a ligand contact to Mg(2+). Lys-16 lines the ATP pocket. Arg-75 contributes to the substrate binding site. Asp-132 (proton donor/acceptor) is an active-site residue. Residues 192–196, 266–268, and 314–318 contribute to the ATP site; these read HLGNG, DFR, and GIGEN. Glu-368 is a binding site for Mg(2+).

The protein belongs to the acetokinase family. In terms of assembly, homodimer. Mg(2+) is required as a cofactor. Mn(2+) serves as cofactor.

It localises to the cytoplasm. It catalyses the reaction acetate + ATP = acetyl phosphate + ADP. It participates in metabolic intermediate biosynthesis; acetyl-CoA biosynthesis; acetyl-CoA from acetate: step 1/2. Functionally, catalyzes the formation of acetyl phosphate from acetate and ATP. Can also catalyze the reverse reaction. This Mycobacterium bovis (strain ATCC BAA-935 / AF2122/97) protein is Acetate kinase.